Consider the following 354-residue polypeptide: Ubiquitin-conjugating enzyme E2 Z (354 aa).

The interval 1–21 (MAESPTEEAATAGAGAAGPGA) is disordered. The UBC core domain occupies 99–253 (QCLLRIKRDI…IRHETIRVAV (155 aa)). Cys188 (glycyl thioester intermediate) is an active-site residue. The segment at 332–354 (NAEMDSDSSSSGTETDLHGSLRV) is disordered. Ser337 is modified (phosphoserine).

Belongs to the ubiquitin-conjugating enzyme family. In terms of tissue distribution, widely expressed. Highly in placenta, pancreas, spleen and testis.

It is found in the cytoplasm. The protein resides in the nucleus. It carries out the reaction S-ubiquitinyl-[E1 ubiquitin-activating enzyme]-L-cysteine + [E2 ubiquitin-conjugating enzyme]-L-cysteine = [E1 ubiquitin-activating enzyme]-L-cysteine + S-ubiquitinyl-[E2 ubiquitin-conjugating enzyme]-L-cysteine.. The protein operates within protein modification; protein ubiquitination. In terms of biological role, catalyzes the covalent attachment of ubiquitin to other proteins. Specific substrate for UBA6, not charged with ubiquitin by UBE1. May be involved in apoptosis regulation. The polypeptide is Ubiquitin-conjugating enzyme E2 Z (UBE2Z) (Homo sapiens (Human)).